Reading from the N-terminus, the 107-residue chain is MMRGNIAQLMQQAQKMQENLQRAQEELAKLEVTGSAGGSMVSVILSGTKECRKVRIDPSILNDQEMIEDLIAAAFNDASNKVDAESKERMGSATLGMSLPPGFKLPF.

Belongs to the YbaB/EbfC family. In terms of assembly, homodimer.

The protein resides in the cytoplasm. It localises to the nucleoid. In terms of biological role, binds to DNA and alters its conformation. May be involved in regulation of gene expression, nucleoid organization and DNA protection. This chain is Nucleoid-associated protein Xfasm12_1216, found in Xylella fastidiosa (strain M12).